Reading from the N-terminus, the 337-residue chain is MEKIKIGDRYVGKGEPTFIIAEGGLNHNGDIDIGKELVKEAKKCGADAIKFQSYHTEDFISKKSEYYELFKSLELSEEEFYELKEYAEKIGIMFISTPLDLKYVDILNKMNVPAFKIASGDLTFYPLLEKVAKTGKPVILSTGMSDIGEIWEAVKVLENNGCRDIILLHCISSYPTPYEDVNLNAIKTLKSIFNIPVGYSDHTLGILAPVVSVALGADVIEKHFTLDKNMEGPDHALSADPEEFKEMVNNIRLVEKMLGSGEKIPMPSERDVIVEARRSIVAKRNIKKGEYLSVDNISFKRPGRGIETKYLSIILNRKIKNDKEEDDIIYWDDLLGD.

One can recognise an AFP-like domain in the interval 279-337 (SIVAKRNIKKGEYLSVDNISFKRPGRGIETKYLSIILNRKIKNDKEEDDIIYWDDLLGD).

It to B.subtilis SpsE.

This is an uncharacterized protein from Methanocaldococcus jannaschii (strain ATCC 43067 / DSM 2661 / JAL-1 / JCM 10045 / NBRC 100440) (Methanococcus jannaschii).